Reading from the N-terminus, the 176-residue chain is Putative ribosomal protein eS10-like (176 aa).

A disordered region spans residues 104-176 (TLHRSRPETG…CGRGRGQPPQ (73 aa)). Residues 108–139 (SRPETGRPRPKGLEGKRPARLTRREADRDTYR) show a composition bias toward basic and acidic residues.

The protein belongs to the eukaryotic ribosomal protein eS10 family.

In Homo sapiens (Human), this protein is Putative ribosomal protein eS10-like (RPS10P5).